A 213-amino-acid polypeptide reads, in one-letter code: Orotate phosphoribosyltransferase (213 aa).

Lys-26 is a binding site for 5-phospho-alpha-D-ribose 1-diphosphate. 34-35 serves as a coordination point for orotate; the sequence is FF. 5-phospho-alpha-D-ribose 1-diphosphate is bound by residues 72–73, Arg-99, Lys-100, Lys-103, His-105, and 124–132; these read YK and DDVITAGTA. 2 residues coordinate orotate: Thr-128 and Arg-156.

It belongs to the purine/pyrimidine phosphoribosyltransferase family. PyrE subfamily. As to quaternary structure, homodimer. It depends on Mg(2+) as a cofactor.

The catalysed reaction is orotidine 5'-phosphate + diphosphate = orotate + 5-phospho-alpha-D-ribose 1-diphosphate. Its pathway is pyrimidine metabolism; UMP biosynthesis via de novo pathway; UMP from orotate: step 1/2. Functionally, catalyzes the transfer of a ribosyl phosphate group from 5-phosphoribose 1-diphosphate to orotate, leading to the formation of orotidine monophosphate (OMP). The polypeptide is Orotate phosphoribosyltransferase (Pseudomonas aeruginosa (strain UCBPP-PA14)).